The sequence spans 207 residues: Segregation and condensation protein B (207 aa).

The protein belongs to the ScpB family. As to quaternary structure, homodimer. Homodimerization may be required to stabilize the binding of ScpA to the Smc head domains. Component of a cohesin-like complex composed of ScpA, ScpB and the Smc homodimer, in which ScpA and ScpB bind to the head domain of Smc. The presence of the three proteins is required for the association of the complex with DNA.

It localises to the cytoplasm. Functionally, participates in chromosomal partition during cell division. May act via the formation of a condensin-like complex containing Smc and ScpA that pull DNA away from mid-cell into both cell halves. The chain is Segregation and condensation protein B from Mycoplasmopsis pulmonis (strain UAB CTIP) (Mycoplasma pulmonis).